Consider the following 227-residue polypeptide: Albumin-2 (227 aa).

4 Hemopexin repeats span residues 3 to 46 (PGYI…GPTP), 61 to 111 (SYGI…FPFF), 117 to 165 (ESGI…YPCF), and 171 to 221 (ESGA…WPSL). Ca(2+)-binding residues include N7 and D65. S118 is a spermine binding site. Ca(2+) contacts are provided by D121 and D175.

Monomer and homodimer. Dimers are prevalent in solution.

It is found in the cytoplasm. The protein localises to the cytosol. Functionally, may play a role in response to oxidative stress and polyamine biosynthesis. The monomeric form binds one hemin per monomer. In the dimeric form, about half of the dimers bind one molecule of spermine each under physiological conditions. Ligand binding is mutually exclusive as binding of hemin leads to dissociation of the dimer. The polypeptide is Albumin-2 (Lathyrus sativus (White vetchling)).